The sequence spans 308 residues: Cyclin-D4-1 (308 aa).

The protein belongs to the cyclin family. Cyclin D subfamily. As to quaternary structure, interacts with CDKA-1, CDKB2-1, KRP4/ICK7, KRP5/ICK3, KRP6/ICK4 and KRP7/ICK5. Expressed in shoot apical meristem, leaf primordia vascular tissues and tapetum of anthers.

Its function is as follows. May activate cell cycle in the root apical meristem (RAM) and promote embryonic root (radicle) protrusion. In Arabidopsis thaliana (Mouse-ear cress), this protein is Cyclin-D4-1 (CYCD4-1).